The following is a 236-amino-acid chain: Sperm flagellar protein 1 (236 aa).

Residues 7-112 (EEALHQLYLW…VLIPLRQRLE (106 aa)) form the Calponin-homology (CH) domain. Residues 115 to 176 (QRRRKQGAGS…PRPPAYNRAL (62 aa)) are disordered. The segment at 183-236 (VLQIAEKEQELLASQETVQVLQMKVRRLEHLLQLKNVRIEDLSRRLQQAERKQR) is essential for homodimerization and microtubule bundling activity.

Homodimer. Interacts with actin, TJP1, CGN and CDH1. In terms of tissue distribution, expressed in the intestinal epithelial cells (at protein level).

Its subcellular location is the cytoplasm. The protein resides in the cell projection. It is found in the cilium. It localises to the flagellum. The protein localises to the cytoskeleton. Its subcellular location is the cilium axoneme. The protein resides in the apical cell membrane. It is found in the basolateral cell membrane. It localises to the stress fiber. The protein localises to the microvillus. Its subcellular location is the lamellipodium. The protein resides in the filopodium. Its function is as follows. Microtubule-associated protein involved in the stabilization of microtubules along the axis of migration during radial intercalation. Promotes the establishment and stabilization of an axis of microtubules required for the active migration of cells into the outer epithelium. Microtubule-associated protein that promotes microtubule bundling and stabilizes microtubules against depolymerization in response to cold shock. Essential for ciliary central apparatus formation which requires both its microtubule-binding and bundling activities and for ciliary localization of HYDIN and SPAG6 in ependymal cilia. Binds actin in intestinal epithelial cells (IECs), essential for IECs survival and contributes to formation of filopodia and lamellipodia in migrating IECs. Regulates planar cell polarity signaling pathway and asymmetric microtubule accumulation in ciliated epithelia. This Homo sapiens (Human) protein is Sperm flagellar protein 1 (SPEF1).